The sequence spans 224 residues: uncharacterized protein (224 aa).

This is an uncharacterized protein from Listeria monocytogenes serovar 1/2a (strain ATCC BAA-679 / EGD-e).